Here is a 301-residue protein sequence, read N- to C-terminus: Probable alpha-L-glutamate ligase (301 aa).

Residues 104–287 (LQLLSRKGIG…IAGMIIEYIE (184 aa)) enclose the ATP-grasp domain. ATP contacts are provided by residues Lys-141, 178 to 179 (EY), Asp-187, and 211 to 213 (RSN). Mg(2+) contacts are provided by Asp-248, Glu-260, and Asn-262. Mn(2+) is bound by residues Asp-248, Glu-260, and Asn-262.

The protein belongs to the RimK family. The cofactor is Mg(2+). Mn(2+) serves as cofactor.

This chain is Probable alpha-L-glutamate ligase, found in Methanococcoides burtonii (strain DSM 6242 / NBRC 107633 / OCM 468 / ACE-M).